A 321-amino-acid polypeptide reads, in one-letter code: Protein ATP1B4 (321 aa).

Residues 1–41 form a disordered region; sequence MEPGMEMNTASEGGTRRGPENKHEEKVQDPNRGEAETKAEM. At 1-72 the chain is on the cytoplasmic side; it reads MEPGMEMNTA…RTCMGRTAKS (72 aa). The span at 14-41 shows a compositional bias: basic and acidic residues; that stretch reads GTRRGPENKHEEKVQDPNRGEAETKAEM. The helical transmembrane segment at 73–93 threads the bilayer; the sequence is WGLILLFYFIFYTCLAGMFAF. The Extracellular portion of the chain corresponds to 94–321; it reads CMYVMLLTLS…RIIFTLSIGK (228 aa). N-linked (GlcNAc...) asparagine glycosylation is found at asparagine 132, asparagine 176, and asparagine 193. A disulfide bridge links cysteine 165 with cysteine 184. Disulfide bonds link cysteine 194–cysteine 210 and cysteine 233–cysteine 293. N-linked (GlcNAc...) asparagine glycans are attached at residues asparagine 239, asparagine 252, and asparagine 270.

This sequence belongs to the X(+)/potassium ATPases subunit beta family. In terms of assembly, composed of two subunits: alpha (catalytic) and beta (accessory). Glycosylated. In terms of tissue distribution, expressed in skeletal muscle, intestine, heart, brain, retina, inner ear and skin.

It is found in the membrane. Functionally, this is the non-catalytic component of the active enzyme, which catalyzes the hydrolysis of ATP coupled with the exchange of Na(+) and K(+) ions across the plasma membrane. The sequence is that of Protein ATP1B4 (ATP1B4) from Gallus gallus (Chicken).